A 152-amino-acid chain; its full sequence is UPF0266 membrane protein YobD (152 aa).

3 helical membrane-spanning segments follow: residues 6–26 (LVLI…QFIM), 45–65 (VDSV…VTSH), and 67–87 (AQMT…IFWI).

The protein belongs to the UPF0266 family.

Its subcellular location is the cell inner membrane. This chain is UPF0266 membrane protein YobD, found in Salmonella paratyphi A (strain ATCC 9150 / SARB42).